We begin with the raw amino-acid sequence, 516 residues long: Cytochrome P450 monooxygenase dtxS2 (516 aa).

Residues 23–43 (ILASVIVLLGLKVATILYTAF) form a helical membrane-spanning segment. A glycan (N-linked (GlcNAc...) asparagine) is linked at asparagine 187. A helical membrane pass occupies residues 229–249 (VLVPLLVFPYISWLLVWWLLS). Cysteine 458 serves as a coordination point for heme.

The protein belongs to the cytochrome P450 family. Heme is required as a cofactor.

The protein localises to the membrane. It participates in secondary metabolite biosynthesis. Functionally, cytochrome P450 monooxygenase; part of the gene cluster that mediates the biosynthesis of destruxins, insecticidal cyclic hexadepsipeptides which induce flaccid paralysis and visceral muscle contraction in insects through targeting the calcium channels and vacuolar-type ATPases. The aldo-keto reductase dtxS3 converts alpha-ketoisocaproic acid from deaminated leucine into alpha-hydroxyisocaproic acid (HIC), which is the first substrate for destruxin assembly by dtxS1. L-aspartate decarboxylase dtxS4 converts aspartic acid into beta-alanine, the last substrate for the destruxin assembly line performed by dtxS1. The nonribosomal peptide synthetase dtxS1 synthesizes destruxins B and B2, whereas the cytochrome P450 monooxygenase dtxS2 is required to convert destruxin B into other destruxin derivatives, including destructins C, D, A and E. Destruxin E-diol (ED) is further produced in a non-enzymatic manner from destruxin E. Destruxins play an important role in virulence and escape from insect host immune defenses. The chain is Cytochrome P450 monooxygenase dtxS2 from Metarhizium robertsii (strain ARSEF 23 / ATCC MYA-3075) (Metarhizium anisopliae (strain ARSEF 23)).